Consider the following 526-residue polypeptide: Bifunctional purine biosynthesis protein PurH (526 aa).

The MGS-like domain maps to 1–147 (MSSIKRALIS…KNWKHVAIVT (147 aa)).

Belongs to the PurH family.

The catalysed reaction is (6R)-10-formyltetrahydrofolate + 5-amino-1-(5-phospho-beta-D-ribosyl)imidazole-4-carboxamide = 5-formamido-1-(5-phospho-D-ribosyl)imidazole-4-carboxamide + (6S)-5,6,7,8-tetrahydrofolate. It carries out the reaction IMP + H2O = 5-formamido-1-(5-phospho-D-ribosyl)imidazole-4-carboxamide. The protein operates within purine metabolism; IMP biosynthesis via de novo pathway; 5-formamido-1-(5-phospho-D-ribosyl)imidazole-4-carboxamide from 5-amino-1-(5-phospho-D-ribosyl)imidazole-4-carboxamide (10-formyl THF route): step 1/1. Its pathway is purine metabolism; IMP biosynthesis via de novo pathway; IMP from 5-formamido-1-(5-phospho-D-ribosyl)imidazole-4-carboxamide: step 1/1. This is Bifunctional purine biosynthesis protein PurH from Neisseria meningitidis serogroup B (strain ATCC BAA-335 / MC58).